Here is a 457-residue protein sequence, read N- to C-terminus: MQKYFVEARQLLALAIPVILAQVAQTAMGFVDTVMAGGYSATDMAAVAIGTSIWLPAILFGHGLLLALTPVVAQLNGSGRRDRIAQQVRQGFWLAGFVSVLIMVVLWNAGYIISSMHNIDPLLAEKAVGYLRALLWGAPGYLFFQVARNQCEGLAKTKPGMVMGFIGLLVNIPVNYIFIYGHFGMPELGGVGCGVATASVYWVMFASMLWWVRRARSMRDIRCAERFSRPDVAVLLRLVQLGLPIALALFFEVTLFAVVALLVSPLGIIDVAGHQIALNFSSLMFVLPLSLAAAVTIRVGFRLGQGSTIDAQVSARTGVGVGVCLAVFTAIFTVLMREQIALLYNDNPEVVLLASHLMLLAAIYQISDSIQVIGSGILRGYKDTRSIFFITFTAYWVLGLPSGYLLALTDMVVPRMGPAGFWCGFIIGLTSAAIMMMLRMRFLQRQPSSIILQRAAR.

Transmembrane regions (helical) follow at residues 11–31, 53–73, 93–113, 127–147, 160–180, 191–211, 243–263, 276–296, 316–336, 350–370, 387–407, and 418–438; these read LLAL…MGFV, IWLP…PVVA, WLAG…GYII, AVGY…FQVA, GMVM…IFIY, VGCG…MLWW, LPIA…ALLV, IALN…AAVT, RTGV…TVLM, VVLL…SDSI, IFFI…YLLA, and PAGF…MMML.

It belongs to the multi antimicrobial extrusion (MATE) (TC 2.A.66.1) family. MdtK subfamily.

Its subcellular location is the cell inner membrane. Its function is as follows. Multidrug efflux pump that functions probably as a Na(+)/drug antiporter. The polypeptide is Multidrug resistance protein MdtK (Klebsiella pneumoniae (strain 342)).